Consider the following 357-residue polypeptide: Glutamine synthetase (357 aa).

A GS beta-grasp domain is found at 25-104 (VMAEYIWIDA…VLCETWDSDG (80 aa)). A GS catalytic domain is found at 111 to 357 (YRHDCARLME…IIAETLCGGL (247 aa)).

Belongs to the glutamine synthetase family. Homooctamer.

The protein resides in the cytoplasm. The enzyme catalyses L-glutamate + NH4(+) + ATP = L-glutamine + ADP + phosphate + H(+). The protein is Glutamine synthetase (glnA) of Emericella nidulans (strain FGSC A4 / ATCC 38163 / CBS 112.46 / NRRL 194 / M139) (Aspergillus nidulans).